The primary structure comprises 821 residues: Pentatricopeptide repeat-containing protein At4g04790, mitochondrial (821 aa).

The N-terminal 74 residues, M1–K74, are a transit peptide targeting the mitochondrion. PPR repeat units lie at residues S372–I406, S407–P441, N442–P476, N477–P511, D512–Q542, T544–P574, and Q578–V612. The interval A801 to K821 is disordered.

Belongs to the PPR family. P subfamily.

It is found in the mitochondrion. This Arabidopsis thaliana (Mouse-ear cress) protein is Pentatricopeptide repeat-containing protein At4g04790, mitochondrial.